We begin with the raw amino-acid sequence, 84 residues long: Large ribosomal subunit protein bL27 (84 aa).

The disordered stretch occupies residues Met-1 to Tyr-20.

This sequence belongs to the bacterial ribosomal protein bL27 family.

The protein is Large ribosomal subunit protein bL27 of Francisella philomiragia subsp. philomiragia (strain ATCC 25017 / CCUG 19701 / FSC 153 / O#319-036).